Consider the following 76-residue polypeptide: DNA-binding protein S1FA2 (76 aa).

The Nuclear localization signal motif lies at proline 50–lysine 55. A compositionally biased stretch (basic residues) spans proline 51–lysine 66. The tract at residues proline 51–glutamate 76 is disordered.

It belongs to the S1FA transcription factor family.

It is found in the nucleus. In terms of biological role, DNA-binding protein that specifically recognizes a negative element (S1F) within the RPS1 promoter. The chain is DNA-binding protein S1FA2 (S1FA2) from Arabidopsis thaliana (Mouse-ear cress).